Consider the following 275-residue polypeptide: DNA polymerase II subunit B4 (275 aa).

Residues 11–17 (LPLAIVR) mediate DNA binding. Residues 112-122 (ASYPAGGAALK) show a composition bias toward low complexity. The disordered stretch occupies residues 112-275 (ASYPAGGAAL…EEVESDEEDE (164 aa)). A Nuclear localization signal motif is present at residues 135-142 (KKRKQEEP). Basic and acidic residues predominate over residues 151 to 161 (SKIDEETKRND). Residues 152-179 (KIDEETKRNDEETENDNTEEENGNDEED) are a coiled coil. 2 stretches are compositionally biased toward acidic residues: residues 162-237 (EETE…EESG) and 266-275 (EEVESDEEDE).

Belongs to the NFYB/HAP3 subunit family. In terms of assembly, heterotrimeric transcription factor composed of three components, NF-YA, NF-YB and NF-YC. NF-YB and NF-YC must interact and dimerize for NF-YA association and DNA binding. Binds directly with DPB3-1.

It localises to the nucleus. Component of the NF-Y/HAP transcription factor complex. The NF-Y complex stimulates the transcription of various genes by recognizing and binding to a CCAAT motif in promoters. This Arabidopsis thaliana (Mouse-ear cress) protein is DNA polymerase II subunit B4.